A 580-amino-acid chain; its full sequence is Thymidine kinase (580 aa).

Disordered regions lie at residues 1 to 60 (MAEG…KSVK) and 133 to 157 (VCGRPPLPPPNHPPPATRPADASMG). Residues 137 to 149 (PPLPPPNHPPPAT) show a composition bias toward pro residues. ATP is bound at residue 260–267 (GVMGVGKS). Glu287 serves as the catalytic Proton acceptor. Position 325 (Gln325) interacts with substrate. Position 415 (Arg415) interacts with ATP. Arg421 lines the substrate pocket.

The protein belongs to the herpesviridae thymidine kinase family. As to quaternary structure, homodimer.

It carries out the reaction thymidine + ATP = dTMP + ADP + H(+). Functionally, catalyzes the transfer of the gamma-phospho group of ATP to thymidine to generate dTMP in the salvage pathway of pyrimidine synthesis. The dTMP serves as a substrate for DNA polymerase during viral DNA replication. Allows the virus to be reactivated and to grow in non-proliferative cells lacking a high concentration of phosphorylated nucleic acid precursors. The protein is Thymidine kinase of Human herpesvirus 8 type P (isolate GK18) (HHV-8).